The chain runs to 418 residues: Histidine--tRNA ligase (418 aa).

Belongs to the class-II aminoacyl-tRNA synthetase family. As to quaternary structure, homodimer.

It is found in the cytoplasm. It catalyses the reaction tRNA(His) + L-histidine + ATP = L-histidyl-tRNA(His) + AMP + diphosphate + H(+). This is Histidine--tRNA ligase from Thermoanaerobacter pseudethanolicus (strain ATCC 33223 / 39E) (Clostridium thermohydrosulfuricum).